The chain runs to 264 residues: Thymidylate synthase 2 (264 aa).

Residue R21 participates in dUMP binding. Residue H51 participates in (6R)-5,10-methylene-5,6,7,8-tetrahydrofolate binding. R126–R127 serves as a coordination point for dUMP. The active-site Nucleophile is C146. DUMP is bound by residues R166 to D169, N177, and H207 to Y209. (6R)-5,10-methylene-5,6,7,8-tetrahydrofolate is bound at residue D169. Position 263 (S263) interacts with (6R)-5,10-methylene-5,6,7,8-tetrahydrofolate.

It belongs to the thymidylate synthase family. Bacterial-type ThyA subfamily. As to quaternary structure, homodimer.

It localises to the cytoplasm. It carries out the reaction dUMP + (6R)-5,10-methylene-5,6,7,8-tetrahydrofolate = 7,8-dihydrofolate + dTMP. The protein operates within pyrimidine metabolism; dTTP biosynthesis. Functionally, catalyzes the reductive methylation of 2'-deoxyuridine-5'-monophosphate (dUMP) to 2'-deoxythymidine-5'-monophosphate (dTMP) while utilizing 5,10-methylenetetrahydrofolate (mTHF) as the methyl donor and reductant in the reaction, yielding dihydrofolate (DHF) as a by-product. This enzymatic reaction provides an intracellular de novo source of dTMP, an essential precursor for DNA biosynthesis. This Bacillus amyloliquefaciens (Bacillus velezensis) protein is Thymidylate synthase 2.